Reading from the N-terminus, the 362-residue chain is Severin (362 aa).

One copy of the Gelsolin-like 1 repeat lies at F53–G102. R162–K170 provides a ligand contact to a 1,2-diacyl-sn-glycero-3-phospho-(1D-myo-inositol-4,5-bisphosphate). Gelsolin-like repeat units lie at residues A172 to N212 and L280 to K323.

Belongs to the villin/gelsolin family.

Severin blocks the ends of F-actin and causes the fragmentation and depolymerization of actin filaments in a Ca(2+) dependent manner. The sequence is that of Severin (sevA) from Dictyostelium discoideum (Social amoeba).